We begin with the raw amino-acid sequence, 151 residues long: MLP-like protein 329 (151 aa).

This sequence belongs to the MLP family.

The polypeptide is MLP-like protein 329 (MLP329) (Arabidopsis thaliana (Mouse-ear cress)).